Here is a 121-residue protein sequence, read N- to C-terminus: Large ribosomal subunit protein uL14 (121 aa).

The protein belongs to the universal ribosomal protein uL14 family. As to quaternary structure, part of the 50S ribosomal subunit. Forms a cluster with proteins L3 and L19. In the 70S ribosome, L14 and L19 interact and together make contacts with the 16S rRNA in bridges B5 and B8.

Binds to 23S rRNA. Forms part of two intersubunit bridges in the 70S ribosome. The sequence is that of Large ribosomal subunit protein uL14 from Synechococcus sp. (strain RCC307).